The chain runs to 240 residues: 1-(5-phosphoribosyl)-5-[(5-phosphoribosylamino)methylideneamino] imidazole-4-carboxamide isomerase (240 aa).

Asp8 (proton acceptor) is an active-site residue. Catalysis depends on Asp129, which acts as the Proton donor.

Belongs to the HisA/HisF family.

It is found in the cytoplasm. It carries out the reaction 1-(5-phospho-beta-D-ribosyl)-5-[(5-phospho-beta-D-ribosylamino)methylideneamino]imidazole-4-carboxamide = 5-[(5-phospho-1-deoxy-D-ribulos-1-ylimino)methylamino]-1-(5-phospho-beta-D-ribosyl)imidazole-4-carboxamide. It functions in the pathway amino-acid biosynthesis; L-histidine biosynthesis; L-histidine from 5-phospho-alpha-D-ribose 1-diphosphate: step 4/9. The sequence is that of 1-(5-phosphoribosyl)-5-[(5-phosphoribosylamino)methylideneamino] imidazole-4-carboxamide isomerase from Oceanobacillus iheyensis (strain DSM 14371 / CIP 107618 / JCM 11309 / KCTC 3954 / HTE831).